A 408-amino-acid chain; its full sequence is Arginine biosynthesis bifunctional protein ArgJ (408 aa).

Substrate contacts are provided by Thr-158, Lys-184, Thr-195, Glu-281, Asn-403, and Thr-408. Thr-195 (nucleophile) is an active-site residue.

Belongs to the ArgJ family. As to quaternary structure, heterotetramer of two alpha and two beta chains.

The protein resides in the cytoplasm. The enzyme catalyses N(2)-acetyl-L-ornithine + L-glutamate = N-acetyl-L-glutamate + L-ornithine. The catalysed reaction is L-glutamate + acetyl-CoA = N-acetyl-L-glutamate + CoA + H(+). It participates in amino-acid biosynthesis; L-arginine biosynthesis; L-ornithine and N-acetyl-L-glutamate from L-glutamate and N(2)-acetyl-L-ornithine (cyclic): step 1/1. The protein operates within amino-acid biosynthesis; L-arginine biosynthesis; N(2)-acetyl-L-ornithine from L-glutamate: step 1/4. Its function is as follows. Catalyzes two activities which are involved in the cyclic version of arginine biosynthesis: the synthesis of N-acetylglutamate from glutamate and acetyl-CoA as the acetyl donor, and of ornithine by transacetylation between N(2)-acetylornithine and glutamate. The sequence is that of Arginine biosynthesis bifunctional protein ArgJ from Bacillus cereus (strain ZK / E33L).